The primary structure comprises 84 residues: Small ribosomal subunit protein bS20 (84 aa).

The disordered stretch occupies residues 1 to 28; sequence MPNIKSAIKRVKTAETRNSRNASQRSAM.

It belongs to the bacterial ribosomal protein bS20 family.

Its function is as follows. Binds directly to 16S ribosomal RNA. The sequence is that of Small ribosomal subunit protein bS20 from Listeria monocytogenes serotype 4b (strain CLIP80459).